The sequence spans 328 residues: Lipoyl synthase (328 aa).

Residues Cys-75, Cys-80, Cys-86, Cys-101, Cys-105, Cys-108, and Ser-315 each coordinate [4Fe-4S] cluster. Positions 87-304 constitute a Radical SAM core domain; sequence FNHGTATFMI…EREAKKMGYE (218 aa).

Belongs to the radical SAM superfamily. Lipoyl synthase family. [4Fe-4S] cluster serves as cofactor.

The protein localises to the cytoplasm. The enzyme catalyses [[Fe-S] cluster scaffold protein carrying a second [4Fe-4S](2+) cluster] + N(6)-octanoyl-L-lysyl-[protein] + 2 oxidized [2Fe-2S]-[ferredoxin] + 2 S-adenosyl-L-methionine + 4 H(+) = [[Fe-S] cluster scaffold protein] + N(6)-[(R)-dihydrolipoyl]-L-lysyl-[protein] + 4 Fe(3+) + 2 hydrogen sulfide + 2 5'-deoxyadenosine + 2 L-methionine + 2 reduced [2Fe-2S]-[ferredoxin]. The protein operates within protein modification; protein lipoylation via endogenous pathway; protein N(6)-(lipoyl)lysine from octanoyl-[acyl-carrier-protein]: step 2/2. Functionally, catalyzes the radical-mediated insertion of two sulfur atoms into the C-6 and C-8 positions of the octanoyl moiety bound to the lipoyl domains of lipoate-dependent enzymes, thereby converting the octanoylated domains into lipoylated derivatives. This chain is Lipoyl synthase, found in Colwellia psychrerythraea (strain 34H / ATCC BAA-681) (Vibrio psychroerythus).